The sequence spans 633 residues: tRNA uridine 5-carboxymethylaminomethyl modification enzyme MnmG (633 aa).

18–23 (GAGHAG) contributes to the FAD binding site. Positions 208-232 (PRVNGNTIDFDKTEEQPGDKTPNHF) are disordered. Residues 216–229 (DFDKTEEQPGDKTP) are compositionally biased toward basic and acidic residues. 279–293 (GPRYCPSIEDKIVRF) is an NAD(+) binding site.

The protein belongs to the MnmG family. As to quaternary structure, homodimer. Heterotetramer of two MnmE and two MnmG subunits. FAD serves as cofactor.

The protein localises to the cytoplasm. Its function is as follows. NAD-binding protein involved in the addition of a carboxymethylaminomethyl (cmnm) group at the wobble position (U34) of certain tRNAs, forming tRNA-cmnm(5)s(2)U34. The polypeptide is tRNA uridine 5-carboxymethylaminomethyl modification enzyme MnmG (Lacticaseibacillus paracasei (strain ATCC 334 / BCRC 17002 / CCUG 31169 / CIP 107868 / KCTC 3260 / NRRL B-441) (Lactobacillus paracasei)).